Consider the following 597-residue polypeptide: Protein GRISEA (597 aa).

A DNA-binding region (copper-fist) is located at residues 1 to 41 (MPIINGQKMACGPCIRGHRSTKCNHYNERVMVPVRKPGRPL). Zn(2+) contacts are provided by cysteine 11, cysteine 14, cysteine 23, and histidine 25. Disordered regions lie at residues 70-115 (PAGT…ASRR), 233-352 (AFVD…PGFG), 407-428 (SRPP…NGNN), and 467-541 (SPNS…SPAL). Residues 92 to 103 (SPASRTSSNRVT) show a composition bias toward polar residues. Residues 104-115 (KSGSGSKSASRR) are compositionally biased toward low complexity. Gly residues predominate over residues 269-281 (GGSGGGGCCGGGK). Residues 287-314 (QAPPPVPAPLPTPPQQQMPNIMPPPQPQ) show a composition bias toward pro residues. A compositionally biased stretch (low complexity) spans 469–495 (NSSHGNSGSADSSANASPSANPLNLAS). The segment covering 521–530 (ANESDGSSNA) has biased composition (polar residues).

The protein localises to the nucleus. Functionally, copper-sensing transcription factor that regulates copper uptake by transactivation of Ctr3, a high affinity copper permease. Binds to the palindromic UAS sequence 5'-TGTTGCTCANNNNAGAGCAACT-3'. Also transactivates Sod2, a mitochondrial manganese superoxide dismutase through the palindromic UAS sequence 5'-GTTTGCTCA-3' with 352 bp separating the two inverted repeats. Loss of function indirectly leads to rearrangement of mitochondrial DNA associated with senescence in wild-type strains. The polypeptide is Protein GRISEA (Podospora anserina (Pleurage anserina)).